The chain runs to 468 residues: UDP-N-acetylmuramate--L-alanine ligase (468 aa).

121–127 provides a ligand contact to ATP; that stretch reads GSHGKTT.

This sequence belongs to the MurCDEF family.

It is found in the cytoplasm. The enzyme catalyses UDP-N-acetyl-alpha-D-muramate + L-alanine + ATP = UDP-N-acetyl-alpha-D-muramoyl-L-alanine + ADP + phosphate + H(+). It functions in the pathway cell wall biogenesis; peptidoglycan biosynthesis. Functionally, cell wall formation. This is UDP-N-acetylmuramate--L-alanine ligase from Borreliella burgdorferi (strain ATCC 35210 / DSM 4680 / CIP 102532 / B31) (Borrelia burgdorferi).